Consider the following 1097-residue polypeptide: Protease Do-like 7 (1097 aa).

The segment at 55–243 is serine protease; that stretch reads VLRTTACRAF…LPLQRVVRAL (189 aa). The PDZ domain occupies 269-366; it reads MTFLHKGFDE…RGGQPLSVSV (98 aa). Residue H524 is the Charge relay system of the active site. Positions 546-556 are enriched in polar residues; the sequence is TSSGDGSQNDF. Residues 546–577 are disordered; sequence TSSGDGSQNDFGSEAKKQRVDEDSSDGIAANG. Over residues 558 to 567 the composition is skewed to basic and acidic residues; that stretch reads SEAKKQRVDE. The Charge relay system role is filled by S785.

Belongs to the peptidase S1C family.

Its subcellular location is the cytoplasm. Functionally, probable serine protease. This Arabidopsis thaliana (Mouse-ear cress) protein is Protease Do-like 7 (DEGP7).